A 162-amino-acid chain; its full sequence is RNA pyrophosphohydrolase (162 aa).

In terms of domain architecture, Nudix hydrolase spans 7–149 (KYRPCVGIML…KKEVYKTVIE (143 aa)). The Nudix box signature appears at 40 to 61 (GGVDDGEELEQAALRELLEEVG).

It belongs to the Nudix hydrolase family. RppH subfamily. A divalent metal cation serves as cofactor.

Its function is as follows. Accelerates the degradation of transcripts by removing pyrophosphate from the 5'-end of triphosphorylated RNA, leading to a more labile monophosphorylated state that can stimulate subsequent ribonuclease cleavage. The protein is RNA pyrophosphohydrolase of Wolbachia pipientis wMel.